The sequence spans 153 residues: MADTLMSDTPFWQRKTLDEMTDAEWESLCDGCGQCCLHKLMDEDTDEIYFTNVACRQLNIKTCQCRHYERRFEFEPDCIKLTRENLPDFEWLPMTCAYRLLAEGKPLPTWHPLLTGSKAAMHGERISVRHIAVKESEVRDWQDHILNKPSWAE.

This sequence belongs to the UPF0260 family.

The polypeptide is UPF0260 protein YcgN (Salmonella dublin (strain CT_02021853)).